The following is a 476-amino-acid chain: Calcium/calmodulin-dependent protein kinase type 1G (476 aa).

The Protein kinase domain maps to 23-277; sequence FIFMEVLGSG…CEKALSHPWI (255 aa). Residues 29 to 37 and Lys52 contribute to the ATP site; that span reads LGSGAFSEV. Residue Asp143 is the Proton acceptor of the active site. The interval 277-317 is autoinhibitory domain; sequence IDGNTALHRDIYPSVSLQIQKNFAKSKWRQAFNAAAVVHHM. Residues 297-318 form a calmodulin-binding region; that stretch reads KNFAKSKWRQAFNAAAVVHHMR. The interval 325-352 is disordered; the sequence is HSPGVRPEVENRPPETQASETSRPSSPE. The span at 338 to 352 shows a compositional bias: polar residues; it reads PETQASETSRPSSPE.

It belongs to the protein kinase superfamily. CAMK Ser/Thr protein kinase family. CaMK subfamily. Post-translationally, may be prenylated on Cys-473. In terms of tissue distribution, mainly expressed in brain with small amounts in skeletal muscles, kidney, spleen and liver. Strongly expressed in forebrain neocortex, striatum and limbic system.

The protein resides in the cytoplasm. Its subcellular location is the golgi apparatus membrane. The protein localises to the cell membrane. The catalysed reaction is L-seryl-[protein] + ATP = O-phospho-L-seryl-[protein] + ADP + H(+). The enzyme catalyses L-threonyl-[protein] + ATP = O-phospho-L-threonyl-[protein] + ADP + H(+). Activated by Ca(2+)/calmodulin. Binding of calmodulin is thought to result in a conformational change and leads to activation through phosphorylation by CAMKK1. In terms of biological role, calcium/calmodulin-dependent protein kinase belonging to a proposed calcium-triggered signaling cascade. In vitro phosphorylates transcription factor CREB1. This Homo sapiens (Human) protein is Calcium/calmodulin-dependent protein kinase type 1G (CAMK1G).